The following is a 136-amino-acid chain: S-protein homolog 17 (136 aa).

The first 22 residues, 1 to 22 (MKNLSIFMFVFSLCMFGHVSRA), serve as a signal peptide directing secretion.

Belongs to the plant self-incompatibility (S1) protein family.

Its subcellular location is the secreted. The polypeptide is S-protein homolog 17 (Arabidopsis thaliana (Mouse-ear cress)).